Consider the following 72-residue polypeptide: UPF0729 protein C18orf32 homolog (72 aa).

The interval 1–33 (MVCIPCIVIPVLLWIFKKFLEPYIYPVVSRIWP) is necessary for its localzation to the endoplasmic reticulum and lipid droplets. Residues 36–72 (AVQQSGDKNMSKVDCKGAGTNGLPTKGPTEVSDKKKD) form a disordered region.

This sequence belongs to the UPF0729 family. In terms of assembly, interacts with DERL1 and AMFR. Post-translationally, undergoes ER-associated degradation (ERAD).

The protein resides in the endoplasmic reticulum. Its subcellular location is the lipid droplet. Its function is as follows. May activate the NF-kappa-B signaling pathway. The protein is UPF0729 protein C18orf32 homolog of Mus musculus (Mouse).